The following is a 126-amino-acid chain: Small ribosomal subunit protein uS12 (126 aa).

The tract at residues 1–28 is disordered; the sequence is MPTINQLVRKGRRKVRTKSKSPALDGNP. Over residues 9-19 the composition is skewed to basic residues; that stretch reads RKGRRKVRTKS. Asp-89 carries the post-translational modification 3-methylthioaspartic acid. Positions 106–126 are disordered; that stretch reads GVEKRRRSRSKYGVKRPKAAK. Residues 109–126 show a composition bias toward basic residues; it reads KRRRSRSKYGVKRPKAAK.

Belongs to the universal ribosomal protein uS12 family. Part of the 30S ribosomal subunit. Contacts proteins S8 and S17. May interact with IF1 in the 30S initiation complex.

Its function is as follows. With S4 and S5 plays an important role in translational accuracy. In terms of biological role, interacts with and stabilizes bases of the 16S rRNA that are involved in tRNA selection in the A site and with the mRNA backbone. Located at the interface of the 30S and 50S subunits, it traverses the body of the 30S subunit contacting proteins on the other side and probably holding the rRNA structure together. The combined cluster of proteins S8, S12 and S17 appears to hold together the shoulder and platform of the 30S subunit. This chain is Small ribosomal subunit protein uS12, found in Opitutus terrae (strain DSM 11246 / JCM 15787 / PB90-1).